The following is a 193-amino-acid chain: Ion-translocating oxidoreductase complex subunit A (193 aa).

6 helical membrane passes run I5–L25, I39–V59, I65–V85, L102–L122, V134–L154, and S171–V191.

Belongs to the NqrDE/RnfAE family. The complex is composed of six subunits: RnfA, RnfB, RnfC, RnfD, RnfE and RnfG.

Its subcellular location is the cell inner membrane. Its function is as follows. Part of a membrane-bound complex that couples electron transfer with translocation of ions across the membrane. This chain is Ion-translocating oxidoreductase complex subunit A, found in Glaesserella parasuis serovar 5 (strain SH0165) (Haemophilus parasuis).